The primary structure comprises 467 residues: 3-isopropylmalate dehydratase large subunit (467 aa).

[4Fe-4S] cluster contacts are provided by Cys347, Cys407, and Cys410. A compositionally biased stretch (polar residues) spans 422–442 (QISASSSNRNFKGRQGSSSGR). Positions 422–443 (QISASSSNRNFKGRQGSSSGRT) are disordered.

It belongs to the aconitase/IPM isomerase family. LeuC type 1 subfamily. As to quaternary structure, heterodimer of LeuC and LeuD. [4Fe-4S] cluster serves as cofactor.

It catalyses the reaction (2R,3S)-3-isopropylmalate = (2S)-2-isopropylmalate. The protein operates within amino-acid biosynthesis; L-leucine biosynthesis; L-leucine from 3-methyl-2-oxobutanoate: step 2/4. Catalyzes the isomerization between 2-isopropylmalate and 3-isopropylmalate, via the formation of 2-isopropylmaleate. This Nostoc punctiforme (strain ATCC 29133 / PCC 73102) protein is 3-isopropylmalate dehydratase large subunit.